A 74-amino-acid polypeptide reads, in one-letter code: Conotoxin Im6.10 (74 aa).

The N-terminal stretch at 1 to 19 (MKTGMIICLLLIAFMDADG) is a signal peptide. A propeptide spanning residues 20–47 (SPGDTLYSQKTADTDSGMKRFQKTFQKR) is cleaved from the precursor. Cystine bridges form between Cys49-Cys58, Cys52-Cys63, and Cys57-Cys73.

Expressed by the venom duct.

It localises to the secreted. In terms of biological role, probable neurotoxin. This is Conotoxin Im6.10 from Conus imperialis (Imperial cone).